A 294-amino-acid polypeptide reads, in one-letter code: Nucleophosmin (294 aa).

A compositionally biased stretch (acidic residues) spans 121-133 (LEEEPESEDEEED). Residues 121 to 244 (LEEEPESEDE…PKTPKVPLSL (124 aa)) are disordered. The short motif at 153–158 (PQKKPK) is the Nuclear localization signal element. The span at 161–186 (EDDEDDDEDEDDDEDDEDDLDDDEEE) shows a compositional bias: acidic residues. The Nuclear localization signal motif lies at 190–196 (PMKKPAR). Positions 223–233 (KTPDSKKDKSL) are enriched in basic and acidic residues.

The protein belongs to the nucleoplasmin family. As to quaternary structure, decamer formed by two pentameric rings associated in a head-to-head fashion. Post-translationally, phosphorylated.

It localises to the cytoplasm. The protein localises to the nucleus. The protein resides in the nucleoplasm. It is found in the nucleolus. Functionally, acts as a chaperonin for the core histones H3, H2B and H4. Associated with nucleolar ribonucleoprotein structures and bind single-stranded nucleic acids. It may function in the assembly and/or transport of ribosome. May stimulate endonuclease activity on apurinic/apyrimidinic (AP) double-stranded DNA. May inhibit endonuclease activity on AP single-stranded RNA. The chain is Nucleophosmin (NPM1) from Gallus gallus (Chicken).